The sequence spans 560 residues: MDIKRTILIAALAIVSYVMVLKWNDDYGQAALPTQNTAASTVAPGLPDGVPAANNGASADVPSANAESSPAELAPVALSKDLIRVKTDVLELAIDPVGGDIVQLNLPKYPRRQDHPDIPFQLFDNGGERVYLAQSGLTGANGPDARSTGRPLYAAEQKSFQLADGQEQLVVDLKFSDNGVNYIKRFSFKRGEYDLSVSYLIDNQSGQAWSGNMFAQLKRDASGDPSSSTATGTATYLGAALWTAGEPYKKVSMKDIDKGSLKENVSGGWVAWLQHYFVTAWIPAKSDNNVVQTRKDSQGNYIIGYTGPAISVPAGGKAETSAMLYAGPKIQSKLKELSPGLELTVDYGFLWFIAQPIFWLLQHIHSLLGNWGWSIIVLTMLIKGLFFPLSAASYRSMARMRAVAPKLAALKERFGDDRQKMSQAMMELYKKEKINPLGGCLPILVQMPVFLALYWVLLESVEMRQAPWMLWITDLSIKDPFFILPIIMGATMFIQQRLNPTPPDPMQAKVMKMMPIIFTFFFLWFPAGLVLYWVVNNCLSISQQWYITRRIEAATKKAAA.

The chain crosses the membrane as a helical span at residues 1–21 (MDIKRTILIAALAIVSYVMVL). Positions 42–66 (VAPGLPDGVPAANNGASADVPSANA) are disordered. Transmembrane regions (helical) follow at residues 341–361 (LELT…FWLL), 367–387 (LLGN…GLFF), 437–457 (LGGC…YWVL), 468–488 (WMLW…PIIM), and 515–535 (PIIF…YWVV).

Belongs to the OXA1/ALB3/YidC family. Type 1 subfamily. Interacts with the Sec translocase complex via SecD. Specifically interacts with transmembrane segments of nascent integral membrane proteins during membrane integration.

The protein resides in the cell inner membrane. In terms of biological role, required for the insertion and/or proper folding and/or complex formation of integral membrane proteins into the membrane. Involved in integration of membrane proteins that insert both dependently and independently of the Sec translocase complex, as well as at least some lipoproteins. Aids folding of multispanning membrane proteins. This Pseudomonas putida (strain W619) protein is Membrane protein insertase YidC.